A 607-amino-acid chain; its full sequence is MGKIIGIDLGTTNSCVAVLEGDEPKVIQNPEGARTTPSVVAFKNGETQVGEVAKRQAITNPNTIQSIKREMGTDYKVDVDGKNYTPQEISAMILQNLKSTAESYLGDKVDKAVITVPAYFNDAERQATKDAGKIAGLEVERIINEPTAAALAYGLDKTEQDEKVLVFDLGGGTFDVSILELGDGVFEVLSTAGDNKLGGDDFDQVIIDYLVEEFKKENGIDLSQDKMALQRLKDAAEKAKKDLSGVSQTQISLPFISAGESGPLHLEITLTRSKFEELSDELVRRTMGPTRQALSDAGLSSNDIDEVILVGGSTRIPAVQEAVKKEVGKEPNKSVNPDEVVAMGAAIQGGVISGDVKDVVLLDVTPLSLGIEIMGGRMNTLIERNTTIPTSKSQVYSTAADNQPAVDIHVLQGERPMASDNKTLGRFSLTDIPPAPRGVPQIEVTFDIDKNGIVNVTAKDLGTNKEQNITIESSSALSDDEIDRMVKDAEQNAEEDKKRREESDLRNEADSLVFQVDKTLKDLGDNVSEDDKKQAEDKKEALKSALEGQDLEDIKTKKEELEKVVQELSMKVYQQAQQGDAAGSNQSDVEDAEYTEVKDDDDKKDNK.

Thr-173 carries the post-translational modification Phosphothreonine; by autocatalysis. Basic and acidic residues-rich tracts occupy residues 490–509 (EQNA…RNEA) and 524–542 (GDNV…KEAL). Disordered regions lie at residues 490-510 (EQNA…NEAD), 524-555 (GDNV…EDIK), and 574-607 (QQAQ…KDNK). Over residues 574 to 587 (QQAQQGDAAGSNQS) the composition is skewed to polar residues. Residues 595–607 (TEVKDDDDKKDNK) show a composition bias toward basic and acidic residues.

The protein belongs to the heat shock protein 70 family.

Its function is as follows. Acts as a chaperone. The sequence is that of Chaperone protein DnaK from Staphylococcus carnosus (strain TM300).